The primary structure comprises 1769 residues: U3 small nucleolar RNA-associated protein 10 (1769 aa).

Ser2 is subject to N-acetylserine. Residues 1729–1767 (LVPVIAELLEDDDEEIEREVRTGLVKVVENVLGEPFDRY) form an HEAT repeat.

It belongs to the HEATR1/UTP10 family. As to quaternary structure, interacts with snoRNA U3. Interacts with MPP10. Component of the ribosomal small subunit (SSU) processome composed of at least 40 protein subunits and snoRNA U3. In the absence of snoRNA3, forms a complex with other t-UTPs. This complex can associate with pre-18S ribosomal RNAs.

The protein resides in the nucleus. It localises to the nucleolus. The protein localises to the mitochondrion. Its function is as follows. Involved in nucleolar processing of pre-18S ribosomal RNA. Required for optimal pre-ribosomal RNA transcription by RNA polymerase I together with a subset of U3 proteins required for transcription (t-UTPs). Involved in ribosome biosynthesis. The sequence is that of U3 small nucleolar RNA-associated protein 10 (UTP10) from Saccharomyces cerevisiae (strain ATCC 204508 / S288c) (Baker's yeast).